The sequence spans 35 residues: Photosystem II reaction center protein T (35 aa).

The helical transmembrane segment at 3 to 23 (ALVYTFLLVSTLGIIFFAIFF) threads the bilayer.

This sequence belongs to the PsbT family. In terms of assembly, PSII is composed of 1 copy each of membrane proteins PsbA, PsbB, PsbC, PsbD, PsbE, PsbF, PsbH, PsbI, PsbJ, PsbK, PsbL, PsbM, PsbT, PsbY, PsbZ, Psb30/Ycf12, at least 3 peripheral proteins of the oxygen-evolving complex and a large number of cofactors. It forms dimeric complexes.

The protein localises to the plastid. Its subcellular location is the chloroplast thylakoid membrane. Its function is as follows. Found at the monomer-monomer interface of the photosystem II (PS II) dimer, plays a role in assembly and dimerization of PSII. PSII is a light-driven water plastoquinone oxidoreductase, using light energy to abstract electrons from H(2)O, generating a proton gradient subsequently used for ATP formation. The sequence is that of Photosystem II reaction center protein T from Asarum canadense (Wild ginger).